The primary structure comprises 369 residues: Ferredoxin--NADP reductase 2 (369 aa).

The disordered stretch occupies residues 1-23 (MDLSIPNPVADTTKQVDGGSPAG). 7 residues coordinate FAD: Asp-58, Gln-66, Tyr-71, Val-111, Phe-146, Asp-311, and Thr-352.

This sequence belongs to the ferredoxin--NADP reductase type 2 family. In terms of assembly, homodimer. FAD serves as cofactor.

The enzyme catalyses 2 reduced [2Fe-2S]-[ferredoxin] + NADP(+) + H(+) = 2 oxidized [2Fe-2S]-[ferredoxin] + NADPH. This chain is Ferredoxin--NADP reductase 2, found in Cupriavidus necator (strain ATCC 17699 / DSM 428 / KCTC 22496 / NCIMB 10442 / H16 / Stanier 337) (Ralstonia eutropha).